The sequence spans 433 residues: 3-phosphoshikimate 1-carboxyvinyltransferase (433 aa).

3-phosphoshikimate-binding residues include Lys21, Ser22, and Arg26. Residue Lys21 participates in phosphoenolpyruvate binding. Gly92 and Arg120 together coordinate phosphoenolpyruvate. Ser166, Gln168, Asp317, and Lys344 together coordinate 3-phosphoshikimate. Position 168 (Gln168) interacts with phosphoenolpyruvate. The Proton acceptor role is filled by Asp317. 2 residues coordinate phosphoenolpyruvate: Arg348 and Arg391.

It belongs to the EPSP synthase family. As to quaternary structure, monomer.

It localises to the cytoplasm. It carries out the reaction 3-phosphoshikimate + phosphoenolpyruvate = 5-O-(1-carboxyvinyl)-3-phosphoshikimate + phosphate. The protein operates within metabolic intermediate biosynthesis; chorismate biosynthesis; chorismate from D-erythrose 4-phosphate and phosphoenolpyruvate: step 6/7. Catalyzes the transfer of the enolpyruvyl moiety of phosphoenolpyruvate (PEP) to the 5-hydroxyl of shikimate-3-phosphate (S3P) to produce enolpyruvyl shikimate-3-phosphate and inorganic phosphate. The chain is 3-phosphoshikimate 1-carboxyvinyltransferase from Caldicellulosiruptor bescii (strain ATCC BAA-1888 / DSM 6725 / KCTC 15123 / Z-1320) (Anaerocellum thermophilum).